A 334-amino-acid chain; its full sequence is Geranylgeranyl pyrophosphate synthase ltmG (334 aa).

3 residues coordinate isopentenyl diphosphate: Lys53, Arg56, and His85. Mg(2+)-binding residues include Asp92 and Asp96. Arg101 lines the dimethylallyl diphosphate pocket. Arg102 is a binding site for isopentenyl diphosphate. Positions 179, 180, and 213 each coordinate dimethylallyl diphosphate. Residue Asp216 coordinates Mg(2+). Dimethylallyl diphosphate is bound by residues Asn220, Lys230, and Lys240.

This sequence belongs to the FPP/GGPP synthase family. Mg(2+) is required as a cofactor.

It catalyses the reaction isopentenyl diphosphate + dimethylallyl diphosphate = (2E)-geranyl diphosphate + diphosphate. It carries out the reaction isopentenyl diphosphate + (2E)-geranyl diphosphate = (2E,6E)-farnesyl diphosphate + diphosphate. The catalysed reaction is isopentenyl diphosphate + (2E,6E)-farnesyl diphosphate = (2E,6E,10E)-geranylgeranyl diphosphate + diphosphate. It participates in secondary metabolite biosynthesis. Geranylgeranyl pyrophosphate synthase; part of the gene cluster that mediates the biosynthesis of lolitrems, indole-diterpene mycotoxins that are potent tremorgens in mammals, and are synthesized by clavicipitaceous fungal endophytes in association with their grass hosts. The geranylgeranyl diphosphate (GGPP) synthase ltmG is proposed to catalyze the first step in lolitrem biosynthesis. LtmG catalyzes a series of iterative condensations of isopentenyl diphosphate (IPP) with dimethylallyl diphosphate (DMAPP), geranyl diphosphate (GPP), and farnesyl diphosphate (FPP), to form GGPP. GGPP then condenses with indole-3-glycerol phosphate to form 3-geranylgeranylindole, an acyclic intermediate, to be incorporated into paxilline. Either ltmG or ltmC could be responsible for this step, as both are putative prenyl transferases. The FAD-dependent monooxygenase ltmM then catalyzes the epoxidation of the two terminal alkenes of the geranylgeranyl moiety, which is subsequently cyclized by ltmB, to paspaline. The cytochrome P450 monooxygenases ltmQ and ltmP can sequentially oxidize paspaline to terpendole E and terpendole F. Alternatively, ltmP converts paspaline to an intermediate which is oxidized by ltmQ to terpendole F. LtmF, ltmK, ltmE and ltmJ appear to be unique to the epichloe endophytes. The prenyltransferase ltmF is involved in the 27-hydroxyl-O-prenylation. The cytochrome P450 monooxygenase ltmK is required for the oxidative acetal ring formation. The multi-functional prenyltransferase ltmE is required for C20- and C21-prenylations of the indole ring of paspalanes and acts together with the cytochrome P450 monooxygenase ltmJ to yield lolitremanes by multiple oxidations and ring closures. The stereoisomer pairs of lolitriol and lolitrem N or lolitrem B and lolitrem F may be attributed to variations in the way in which ring closure can occur under the action of ltmJ. While the major product of this pathway is lolitrem B, the prenyl transferases and cytochrome P450 monooxygenases identified in this pathway have a remarkable versatility in their regio- and stereo-specificities to generate a diverse range of metabolites that are products of a metabolic grid rather than a linear pathway. This chain is Geranylgeranyl pyrophosphate synthase ltmG, found in Epichloe festucae (strain Fl1).